An 890-amino-acid chain; its full sequence is DNA mismatch repair protein MutS (890 aa).

An ATP-binding site is contributed by 634–641; it reads GPNMGGKS.

It belongs to the DNA mismatch repair MutS family.

Functionally, this protein is involved in the repair of mismatches in DNA. It is possible that it carries out the mismatch recognition step. This protein has a weak ATPase activity. The sequence is that of DNA mismatch repair protein MutS from Burkholderia pseudomallei (strain 1710b).